Here is an 856-residue protein sequence, read N- to C-terminus: Envelope glycoprotein gp160 (856 aa).

Residues 1 to 31 (MRVKGIRRNCQHLWIWGTMLFGMWMICSAVE) form the signal peptide. At 32 to 684 (QLWVTVYYGV…ITNWLWYIKI (653 aa)) the chain is on the extracellular side. Cys53 and Cys73 form a disulfide bridge. Residues Asn87, Asn134, Asn140, Asn151, Asn155, Asn183, Asn197, Asn234, Asn241, Asn262, Asn276, Asn289, and Asn295 are each glycosylated (N-linked (GlcNAc...) asparagine; by host). 5 cysteine pairs are disulfide-bonded: Cys118–Cys205, Cys125–Cys196, Cys130–Cys152, Cys218–Cys247, and Cys228–Cys239. The tract at residues 130-151 (CIDKNITDWENKTIIGGGEVKN) is V1. Residues 152 to 196 (CSFNITTSIRDKVHKEYALFYKLDVVPIKSNNDSSTYTRYRLIHC) are V2. The tract at residues 296–329 (CTRPNNNVRRRHIHIGPGRAFYTGEIRGNIRQAH) is V3. A disulfide bridge links Cys296 with Cys330. N-linked (GlcNAc...) asparagine; by host glycans are attached at residues Asn331, Asn338, Asn354, and Asn360. Residues 362–372 (SSGGDPEIVTH) form a CD4-binding loop region. Disulfide bonds link Cys376–Cys444 and Cys383–Cys417. The V4 stretch occupies residues 383–417 (CDSTQLFNSTWNVTGISTEGNNNTEENGDTITLPC). Residues Asn390, Asn394, Asn404, Asn447, and Asn459 are each glycosylated (N-linked (GlcNAc...) asparagine; by host). V5 stretches follow at residues 460-470 (SSSREEIFRPG) and 462-470 (SREEIFRPG). The segment at 511 to 532 (AVGAIGAMFLGFLGAAGSTMGA) is fusion peptide. An immunosuppression region spans residues 574-592 (KQLQARVLAVERYLRDQQL). A disulfide bridge links Cys598 with Cys604. N-linked (GlcNAc...) asparagine; by host glycosylation is found at Asn611, Asn616, Asn625, and Asn637. A coiled-coil region spans residues 633–667 (REIDNYTSLIYNLIEESQNQQEKNEQELLELDKWA). The segment at 662–683 (ELDKWASLWNWFSITNWLWYIK) is MPER; binding to GalCer. Residues 685–705 (FIMIVGGLVGLRIVFSVLSIV) form a helical membrane-spanning segment. At 706–856 (NRVRQGYSPL…IRQGLERALL (151 aa)) the chain is on the cytoplasmic side. Residues 712–715 (YSPL) carry the YXXL motif; contains endocytosis signal motif. The interval 716 to 742 (SFQTHLPTPRGPDRPEGTEEEGGERDR) is disordered. Residues Cys764 and Cys837 are each lipidated (S-palmitoyl cysteine; by host). A Di-leucine internalization motif motif is present at residues 855–856 (LL).

This sequence belongs to the HIV-1 env protein family. As to quaternary structure, the mature envelope protein (Env) consists of a homotrimer of non-covalently associated gp120-gp41 heterodimers. The resulting complex protrudes from the virus surface as a spike. There seems to be as few as 10 spikes on the average virion. Interacts with host CD4, CCR5 and CXCR4. Gp120 also interacts with the C-type lectins CD209/DC-SIGN and CLEC4M/DC-SIGNR (collectively referred to as DC-SIGN(R)). Gp120 and gp41 interact with GalCer. Gp120 interacts with host ITGA4/ITGB7 complex; on CD4+ T-cells, this interaction results in rapid activation of integrin ITGAL/LFA-1, which facilitates efficient cell-to-cell spreading of HIV-1. Gp120 interacts with cell-associated heparan sulfate; this interaction increases virus infectivity on permissive cells and may be involved in infection of CD4- cells. The mature envelope protein (Env) consists of a homotrimer of non-covalently associated gp120-gp41 heterodimers. The resulting complex protrudes from the virus surface as a spike. There seems to be as few as 10 spikes on the average virion. Highly glycosylated by host. The high number of glycan on the protein is reffered to as 'glycan shield' because it contributes to hide protein sequence from adaptive immune system. In terms of processing, palmitoylation of the transmembrane protein and of Env polyprotein (prior to its proteolytic cleavage) is essential for their association with host cell membrane lipid rafts. Palmitoylation is therefore required for envelope trafficking to classical lipid rafts, but not for viral replication. Post-translationally, specific enzymatic cleavages in vivo yield mature proteins. Envelope glycoproteins are synthesized as an inactive precursor that is heavily N-glycosylated and processed likely by host cell furin in the Golgi to yield the mature SU and TM proteins. The cleavage site between SU and TM requires the minimal sequence [KR]-X-[KR]-R. About 2 of the 9 disulfide bonds of gp41 are reduced by P4HB/PDI, following binding to CD4 receptor.

It is found in the virion membrane. It localises to the host cell membrane. The protein localises to the host endosome membrane. Its function is as follows. Oligomerizes in the host endoplasmic reticulum into predominantly trimers. In a second time, gp160 transits in the host Golgi, where glycosylation is completed. The precursor is then proteolytically cleaved in the trans-Golgi and thereby activated by cellular furin or furin-like proteases to produce gp120 and gp41. Attaches the virus to the host lymphoid cell by binding to the primary receptor CD4. This interaction induces a structural rearrangement creating a high affinity binding site for a chemokine coreceptor like CXCR4 and/or CCR5. Acts as a ligand for CD209/DC-SIGN and CLEC4M/DC-SIGNR, which are respectively found on dendritic cells (DCs), and on endothelial cells of liver sinusoids and lymph node sinuses. These interactions allow capture of viral particles at mucosal surfaces by these cells and subsequent transmission to permissive cells. HIV subverts the migration properties of dendritic cells to gain access to CD4+ T-cells in lymph nodes. Virus transmission to permissive T-cells occurs either in trans (without DCs infection, through viral capture and transmission), or in cis (following DCs productive infection, through the usual CD4-gp120 interaction), thereby inducing a robust infection. In trans infection, bound virions remain infectious over days and it is proposed that they are not degraded, but protected in non-lysosomal acidic organelles within the DCs close to the cell membrane thus contributing to the viral infectious potential during DCs' migration from the periphery to the lymphoid tissues. On arrival at lymphoid tissues, intact virions recycle back to DCs' cell surface allowing virus transmission to CD4+ T-cells. In terms of biological role, acts as a class I viral fusion protein. Under the current model, the protein has at least 3 conformational states: pre-fusion native state, pre-hairpin intermediate state, and post-fusion hairpin state. During fusion of viral and target intracellular membranes, the coiled coil regions (heptad repeats) assume a trimer-of-hairpins structure, positioning the fusion peptide in close proximity to the C-terminal region of the ectodomain. The formation of this structure appears to drive apposition and subsequent fusion of viral and target cell membranes. Complete fusion occurs in host cell endosomes and is dynamin-dependent, however some lipid transfer might occur at the plasma membrane. The virus undergoes clathrin-dependent internalization long before endosomal fusion, thus minimizing the surface exposure of conserved viral epitopes during fusion and reducing the efficacy of inhibitors targeting these epitopes. Membranes fusion leads to delivery of the nucleocapsid into the cytoplasm. This chain is Envelope glycoprotein gp160, found in Homo sapiens (Human).